The following is a 322-amino-acid chain: Ferrochelatase (322 aa).

Fe cation-binding residues include His-194 and Glu-275.

It belongs to the ferrochelatase family.

It is found in the cytoplasm. The enzyme catalyses heme b + 2 H(+) = protoporphyrin IX + Fe(2+). It functions in the pathway porphyrin-containing compound metabolism; protoheme biosynthesis; protoheme from protoporphyrin-IX: step 1/1. Its function is as follows. Catalyzes the ferrous insertion into protoporphyrin IX. This is Ferrochelatase from Proteus mirabilis (strain HI4320).